We begin with the raw amino-acid sequence, 312 residues long: Probable carboxylesterase 7 (312 aa).

Residue methionine 1 is modified to N-acetylmethionine. The Involved in the stabilization of the negatively charged intermediate by the formation of the oxyanion hole signature appears at 75 to 77 (HGG). Residues serine 159, aspartate 255, and histidine 287 contribute to the active site.

It belongs to the 'GDXG' lipolytic enzyme family. Expressed in leaves, stems, flowers and siliques.

The catalysed reaction is a carboxylic ester + H2O = an alcohol + a carboxylate + H(+). Functionally, carboxylesterase acting on esters with varying acyl chain length. This is Probable carboxylesterase 7 (CXE7) from Arabidopsis thaliana (Mouse-ear cress).